The primary structure comprises 99 residues: DNA-directed RNA polymerase subunit omega (99 aa).

Belongs to the RNA polymerase subunit omega family. In terms of assembly, the RNAP catalytic core consists of 2 alpha, 1 beta, 1 beta' and 1 omega subunit. When a sigma factor is associated with the core the holoenzyme is formed, which can initiate transcription.

The enzyme catalyses RNA(n) + a ribonucleoside 5'-triphosphate = RNA(n+1) + diphosphate. Functionally, promotes RNA polymerase assembly. Latches the N- and C-terminal regions of the beta' subunit thereby facilitating its interaction with the beta and alpha subunits. The protein is DNA-directed RNA polymerase subunit omega of Xylella fastidiosa (strain Temecula1 / ATCC 700964).